A 452-amino-acid polypeptide reads, in one-letter code: Pup--protein ligase (452 aa).

A Mg(2+)-binding site is contributed by glutamate 9. An ATP-binding site is contributed by arginine 53. Mg(2+) is bound at residue tyrosine 55. Aspartate 57 functions as the Proton acceptor in the catalytic mechanism. Position 63 (glutamate 63) interacts with Mg(2+). Positions 66 and 419 each coordinate ATP.

The protein belongs to the Pup ligase/Pup deamidase family. Pup-conjugating enzyme subfamily. Post-translationally, pupylated at an undetermined lysine residue by the prokaryotic ubiquitin-like protein Pup, which leads to its degradation by the proteasome and thereby constitutes a negative auto-regulation.

It carries out the reaction ATP + [prokaryotic ubiquitin-like protein]-L-glutamate + [protein]-L-lysine = ADP + phosphate + N(6)-([prokaryotic ubiquitin-like protein]-gamma-L-glutamyl)-[protein]-L-lysine.. The protein operates within protein degradation; proteasomal Pup-dependent pathway. It functions in the pathway protein modification; protein pupylation. Catalyzes the covalent attachment of the prokaryotic ubiquitin-like protein modifier Pup to the proteasomal substrate proteins, thereby targeting them for proteasomal degradation. This tagging system is termed pupylation. The ligation reaction likely involves the side-chain carboxylate of the C-terminal glutamate of Pup and the side-chain amino group of a substrate lysine. This Mycolicibacterium smegmatis (strain ATCC 700084 / mc(2)155) (Mycobacterium smegmatis) protein is Pup--protein ligase (pafA).